The sequence spans 66 residues: Small ribosomal subunit protein bS21 (66 aa).

Belongs to the bacterial ribosomal protein bS21 family.

In Rickettsia felis (strain ATCC VR-1525 / URRWXCal2) (Rickettsia azadi), this protein is Small ribosomal subunit protein bS21.